The chain runs to 383 residues: Outer membrane protein S2 (383 aa).

Positions 1–21 are cleaved as a signal peptide; it reads MKRKVLALVIPALLAAGAAHA.

It belongs to the Gram-negative porin family. As to quaternary structure, homotrimer.

The protein resides in the cell outer membrane. Forms pores that allow passive diffusion of small molecules across the outer membrane. This is Outer membrane protein S2 (ompS2) from Salmonella typhi.